The sequence spans 129 residues: Large ribosomal subunit protein bL20 (129 aa).

It belongs to the bacterial ribosomal protein bL20 family.

Binds directly to 23S ribosomal RNA and is necessary for the in vitro assembly process of the 50S ribosomal subunit. It is not involved in the protein synthesizing functions of that subunit. The sequence is that of Large ribosomal subunit protein bL20 from Mycolicibacterium gilvum (strain PYR-GCK) (Mycobacterium gilvum (strain PYR-GCK)).